Here is a 249-residue protein sequence, read N- to C-terminus: DNA repair protein RecO (249 aa).

The protein belongs to the RecO family.

Its function is as follows. Involved in DNA repair and RecF pathway recombination. This chain is DNA repair protein RecO, found in Afipia carboxidovorans (strain ATCC 49405 / DSM 1227 / KCTC 32145 / OM5) (Oligotropha carboxidovorans).